The chain runs to 456 residues: Trigger factor (456 aa).

The 86-residue stretch at 192–277 folds into the PPIase FKBP-type domain; sequence GDTVVIDFVG…IHEVKTKEVP (86 aa).

This sequence belongs to the FKBP-type PPIase family. Tig subfamily.

Its subcellular location is the cytoplasm. The enzyme catalyses [protein]-peptidylproline (omega=180) = [protein]-peptidylproline (omega=0). Involved in protein export. Acts as a chaperone by maintaining the newly synthesized protein in an open conformation. Functions as a peptidyl-prolyl cis-trans isomerase. This is Trigger factor from Streptococcus pyogenes serotype M12 (strain MGAS9429).